A 429-amino-acid chain; its full sequence is tRNA (guanine(9)-N1)-methyltransferase (429 aa).

Residues 131-379 enclose the SAM-dependent MTase TRM10-type domain; it reads KERKEAQRRI…AVIPIRKYAP (249 aa). Residues 285 to 286, Gly305, 309 to 313, Cys317, Leu331, and 344 to 346 contribute to the S-adenosyl-L-methionine site; these read LS, DRNRH, and KAL. The active-site Proton acceptor is the Asp309. Positions 383–429 are disordered; sequence AKRAKTETKRNEKVEEEVECTSAEGEEDIGVIEESAEVDPEDVFSNQ. Residues 386-395 are compositionally biased toward basic and acidic residues; it reads AKTETKRNEK. The span at 396 to 429 shows a compositional bias: acidic residues; it reads VEEEVECTSAEGEEDIGVIEESAEVDPEDVFSNQ.

Belongs to the class IV-like SAM-binding methyltransferase superfamily. TRM10 family. As to quaternary structure, monomer.

The protein localises to the cytoplasm. It is found in the nucleus. The enzyme catalyses guanosine(9) in tRNA + S-adenosyl-L-methionine = N(1)-methylguanosine(9) in tRNA + S-adenosyl-L-homocysteine + H(+). Its function is as follows. S-adenosyl-L-methionine-dependent guanine N(1)-methyltransferase that catalyzes the formation of N(1)-methylguanine at position 9 (m1G9) in cytoplasmic tRNA. The chain is tRNA (guanine(9)-N1)-methyltransferase from Cryptococcus neoformans var. neoformans serotype D (strain B-3501A) (Filobasidiella neoformans).